A 77-amino-acid chain; its full sequence is Conotoxin Mr8.2 (77 aa).

The signal sequence occupies residues 1–16 (MLRLITAAVLVSACLA). Positions 17 to 32 (YPQKKRTPPQTRPTSR) are excised as a propeptide.

It belongs to the conotoxin B2 family. Post-translationally, contains 5 disulfide bonds. In terms of tissue distribution, expressed by the venom duct.

It is found in the secreted. The chain is Conotoxin Mr8.2 from Conus marmoreus (Marble cone).